Consider the following 455-residue polypeptide: Chromosomal replication initiator protein DnaA (455 aa).

The domain I, interacts with DnaA modulators stretch occupies residues 1–70; sequence MTNETWVQVR…RMRLTEAGSP (70 aa). A domain II region spans residues 70-113; that stretch reads PVERLEFAVSNTPRAPLKEVKAAAPAASPARARPAPPEEDLRGA. Residues 87 to 109 form a disordered region; it reads KEVKAAAPAASPARARPAPPEED. Residues 91-102 are compositionally biased toward low complexity; that stretch reads AAAPAASPARAR. Residues 114 to 335 are domain III, AAA+ region; the sequence is PLDARFTFDS…GALTRLFAFA (222 aa). G158, G160, K161, and T162 together coordinate ATP. The interval 336-455 is domain IV, binds dsDNA; the sequence is SLVGREITLD…LQLLRRLLQA (120 aa).

This sequence belongs to the DnaA family. In terms of assembly, oligomerizes as a right-handed, spiral filament on DNA at oriC.

Its subcellular location is the cytoplasm. In terms of biological role, plays an essential role in the initiation and regulation of chromosomal replication. ATP-DnaA binds to the origin of replication (oriC) to initiate formation of the DNA replication initiation complex once per cell cycle. Binds the DnaA box (a 9 base pair repeat at the origin) and separates the double-stranded (ds)DNA. Forms a right-handed helical filament on oriC DNA; dsDNA binds to the exterior of the filament while single-stranded (ss)DNA is stabiized in the filament's interior. The ATP-DnaA-oriC complex binds and stabilizes one strand of the AT-rich DNA unwinding element (DUE), permitting loading of DNA polymerase. After initiation quickly degrades to an ADP-DnaA complex that is not apt for DNA replication. Binds acidic phospholipids. In Cereibacter sphaeroides (strain ATCC 17029 / ATH 2.4.9) (Rhodobacter sphaeroides), this protein is Chromosomal replication initiator protein DnaA.